A 503-amino-acid chain; its full sequence is Cytosolic carboxypeptidase 6 (503 aa).

Residues 167-438 enclose the Peptidase M14 domain; it reads YPYTYTRFQH…NVARTFLDYY (272 aa). Zn(2+)-binding residues include H230, E233, and H328. E401 acts as the Proton donor/acceptor in catalysis. Basic and acidic residues-rich tracts occupy residues 459–469 and 487–503; these read IEVQRRKEKSP and KGDK…STPF. The disordered stretch occupies residues 459-503; that stretch reads IEVQRRKEKSPPYKHPLLRGPASNYPNSKGDKKSSVNHKDPSTPF.

It belongs to the peptidase M14 family. Interacts with MYLK. The cofactor is Zn(2+).

It localises to the cytoplasm. Its subcellular location is the cytosol. The protein localises to the cytoskeleton. It is found in the microtubule organizing center. The protein resides in the centrosome. It localises to the centriole. Its subcellular location is the golgi apparatus. The protein localises to the cilium basal body. It carries out the reaction (L-glutamyl)(n+1)-gamma-L-glutamyl-L-glutamyl-[protein] + H2O = (L-glutamyl)(n)-gamma-L-glutamyl-L-glutamyl-[protein] + L-glutamate. The catalysed reaction is C-terminal L-alpha-aminoacyl-L-glutamyl-L-glutamyl-[tubulin] + H2O = C-terminal L-alpha-aminoacyl-L-glutamyl-[tubulin] + L-glutamate. Functionally, metallocarboxypeptidase that mediates protein deglutamylation of tubulin and non-tubulin target proteins. Catalyzes the removal of polyglutamate side chains present on the gamma-carboxyl group of glutamate residues within the C-terminal tail of tubulin protein. Specifically cleaves tubulin long-side-chains, while it is not able to remove the branching point glutamate. Also catalyzes the removal of polyglutamate residues from the carboxy-terminus of non-tubulin proteins such as MYLK. Mediates the deglutamylation of nucleotidyltransferase CGAS, leading to CGAS antiviral defense response activation. Involved in KLF4 deglutamylation which promotes KLF4 proteasome-mediated degradation, thereby negatively regulating cell pluripotency maintenance and embryogenesis. The sequence is that of Cytosolic carboxypeptidase 6 from Homo sapiens (Human).